A 498-amino-acid polypeptide reads, in one-letter code: Glycerol kinase (498 aa).

Thr12 provides a ligand contact to ADP. Positions 12, 13, and 14 each coordinate ATP. Position 12 (Thr12) interacts with sn-glycerol 3-phosphate. Arg16 lines the ADP pocket. Positions 82, 83, and 134 each coordinate sn-glycerol 3-phosphate. Glycerol contacts are provided by Arg82, Glu83, and Tyr134. A Phosphohistidine; by HPr modification is found at His230. Sn-glycerol 3-phosphate is bound at residue Asp244. Residues Asp244 and Gln245 each contribute to the glycerol site. Thr266 and Gly309 together coordinate ADP. ATP-binding residues include Thr266, Gly309, Gln313, and Gly410. ADP contacts are provided by Gly410 and Asn414.

The protein belongs to the FGGY kinase family. As to quaternary structure, homotetramer and homodimer (in equilibrium). Post-translationally, the phosphoenolpyruvate-dependent sugar phosphotransferase system (PTS), including enzyme I, and histidine-containing protein (HPr) are required for the phosphorylation, which leads to the activation of the enzyme.

The catalysed reaction is glycerol + ATP = sn-glycerol 3-phosphate + ADP + H(+). The protein operates within polyol metabolism; glycerol degradation via glycerol kinase pathway; sn-glycerol 3-phosphate from glycerol: step 1/1. Its activity is regulated as follows. Activated by phosphorylation and inhibited by fructose 1,6-bisphosphate (FBP). Its function is as follows. Key enzyme in the regulation of glycerol uptake and metabolism. Catalyzes the phosphorylation of glycerol to yield sn-glycerol 3-phosphate. The polypeptide is Glycerol kinase (Staphylococcus aureus (strain MW2)).